The primary structure comprises 224 residues: ATP synthase subunit a (224 aa).

The next 6 membrane-spanning stretches (helical) occupy residues Leu-17–Leu-37, Ile-72–Ile-92, Leu-99–Ile-119, Met-125–Ile-145, Leu-170–Leu-190, and Ile-195–Leu-215.

Belongs to the ATPase A chain family. As to quaternary structure, F-type ATPases have 2 components, CF(1) - the catalytic core - and CF(0) - the membrane proton channel. CF(1) has five subunits: alpha(3), beta(3), gamma(1), delta(1), epsilon(1). CF(0) has three main subunits: a, b and c.

It is found in the mitochondrion inner membrane. Functionally, mitochondrial membrane ATP synthase (F(1)F(0) ATP synthase or Complex V) produces ATP from ADP in the presence of a proton gradient across the membrane which is generated by electron transport complexes of the respiratory chain. F-type ATPases consist of two structural domains, F(1) - containing the extramembraneous catalytic core and F(0) - containing the membrane proton channel, linked together by a central stalk and a peripheral stalk. During catalysis, ATP synthesis in the catalytic domain of F(1) is coupled via a rotary mechanism of the central stalk subunits to proton translocation. Key component of the proton channel; it may play a direct role in the translocation of protons across the membrane. This is ATP synthase subunit a (mt:ATPase6) from Drosophila mauritiana (Fruit fly).